The following is a 342-amino-acid chain: Farnesyl pyrophosphate synthase 1 (342 aa).

Positions 48, 51, and 86 each coordinate isopentenyl diphosphate. Residues D93 and D97 each coordinate Mg(2+). Residue R102 participates in dimethylallyl diphosphate binding. An isopentenyl diphosphate-binding site is contributed by R103. Residues K190, T191, Q229, K246, and K255 each coordinate dimethylallyl diphosphate.

Belongs to the FPP/GGPP synthase family. It depends on Mg(2+) as a cofactor.

It localises to the cytoplasm. It carries out the reaction isopentenyl diphosphate + dimethylallyl diphosphate = (2E)-geranyl diphosphate + diphosphate. The enzyme catalyses isopentenyl diphosphate + (2E)-geranyl diphosphate = (2E,6E)-farnesyl diphosphate + diphosphate. It participates in isoprenoid biosynthesis; farnesyl diphosphate biosynthesis; farnesyl diphosphate from geranyl diphosphate and isopentenyl diphosphate: step 1/1. Its pathway is isoprenoid biosynthesis; geranyl diphosphate biosynthesis; geranyl diphosphate from dimethylallyl diphosphate and isopentenyl diphosphate: step 1/1. Catalyzes the sequential condensation of isopentenyl pyrophosphate with the allylic pyrophosphates, dimethylallyl pyrophosphate, and then with the resultant geranylpyrophosphate to the ultimate product farnesyl pyrophosphate. This Parthenium argentatum (Guayule rubber plant) protein is Farnesyl pyrophosphate synthase 1 (FPS1).